Here is a 69-residue protein sequence, read N- to C-terminus: Conotoxin Cal12.1p5 (69 aa).

The propeptide occupies 1–23 (DLITNSYTRGKPRHVTSWRNLKT).

Post-translationally, contains 4 disulfide bonds. In terms of tissue distribution, expressed by the venom duct.

It is found in the secreted. In Californiconus californicus (California cone), this protein is Conotoxin Cal12.1p5.